Here is a 466-residue protein sequence, read N- to C-terminus: 3-isopropylmalate dehydratase large subunit (466 aa).

[4Fe-4S] cluster is bound by residues Cys347, Cys407, and Cys410.

The protein belongs to the aconitase/IPM isomerase family. LeuC type 1 subfamily. In terms of assembly, heterodimer of LeuC and LeuD. Requires [4Fe-4S] cluster as cofactor.

The enzyme catalyses (2R,3S)-3-isopropylmalate = (2S)-2-isopropylmalate. It participates in amino-acid biosynthesis; L-leucine biosynthesis; L-leucine from 3-methyl-2-oxobutanoate: step 2/4. In terms of biological role, catalyzes the isomerization between 2-isopropylmalate and 3-isopropylmalate, via the formation of 2-isopropylmaleate. The sequence is that of 3-isopropylmalate dehydratase large subunit from Shigella sonnei (strain Ss046).